Reading from the N-terminus, the 147-residue chain is Deoxyuridine 5'-triphosphate nucleotidohydrolase (147 aa).

Residue R24 participates in Mg(2+) binding. DUTP-binding positions include 68-70 (PRS), 82-85 (GVID), Y88, G93, I95, and R111.

It belongs to the dUTPase family. It depends on Mg(2+) as a cofactor.

It catalyses the reaction dUTP + H2O = dUMP + diphosphate + H(+). Functionally, this enzyme is involved in nucleotide metabolism: it produces dUMP, the immediate precursor of thymidine nucleotides and it decreases the intracellular concentration of dUTP so that uracil cannot be incorporated into DNA. The protein is Deoxyuridine 5'-triphosphate nucleotidohydrolase (OPG046) of Homo sapiens (Human).